The primary structure comprises 35 residues: U14-ctenitoxin-Pn1a (35 aa).

3 disulfide bridges follow: Cys-3–Cys-17, Cys-10–Cys-22, and Cys-16–Cys-32.

In terms of tissue distribution, expressed by the venom gland.

It localises to the secreted. Neurotoxin. The polypeptide is U14-ctenitoxin-Pn1a (Phoneutria nigriventer (Brazilian armed spider)).